The sequence spans 238 residues: Cell division protein A (238 aa).

In terms of assembly, interacts with CdvB.

The protein localises to the cytoplasm. It is found in the nucleoid. The protein resides in the cell membrane. Functionally, part of a cell division machinery. The CdvA, CdvB and CdvC proteins polymerize between segregating nucleoids and persist throughout cell division, forming a successively smaller structure during constriction. CdvA is a membrane interacting protein that recruits ESCRT-III homologs to the membrane. The protein is Cell division protein A of Sulfolobus acidocaldarius (strain ATCC 33909 / DSM 639 / JCM 8929 / NBRC 15157 / NCIMB 11770).